The sequence spans 108 residues: MSPIQYDYHHLPHVKTQNQSKKTLWITLVLTLFFTIVEIVGGLLSNSLALLSDSAHMASDVLALGLSMIALYLAMRPPNHRFTFGYLRFEIITSFLNGLTLAIISIGI.

The next 3 membrane-spanning stretches (helical) occupy residues 24-44 (LWIT…GGLL), 55-75 (AHMA…YLAM), and 88-108 (RFEI…SIGI).

The protein to cation A.eutrophus efflux system protein CzcD.

The protein localises to the cell membrane. This is an uncharacterized protein from Geobacillus stearothermophilus (Bacillus stearothermophilus).